The sequence spans 233 residues: UPF0758 protein Rcas_0037 (233 aa).

Residues 107–229 (QIRSPTDAAQ…FVSMRERGLA (123 aa)) enclose the MPN domain. Zn(2+) contacts are provided by H178, H180, and D191. The JAMM motif motif lies at 178–191 (HNHPSGDPTPSPED).

Belongs to the UPF0758 family.

The chain is UPF0758 protein Rcas_0037 from Roseiflexus castenholzii (strain DSM 13941 / HLO8).